The following is a 68-amino-acid chain: DNA-directed RNA polymerase subunit Rpo10 (68 aa).

Residues Cys7, Cys10, Cys44, and Cys45 each coordinate Zn(2+).

The protein belongs to the archaeal Rpo10/eukaryotic RPB10 RNA polymerase subunit family. As to quaternary structure, part of the RNA polymerase complex. Zn(2+) serves as cofactor.

It is found in the cytoplasm. The enzyme catalyses RNA(n) + a ribonucleoside 5'-triphosphate = RNA(n+1) + diphosphate. Functionally, DNA-dependent RNA polymerase (RNAP) catalyzes the transcription of DNA into RNA using the four ribonucleoside triphosphates as substrates. The sequence is that of DNA-directed RNA polymerase subunit Rpo10 from Methanococcus vannielii (strain ATCC 35089 / DSM 1224 / JCM 13029 / OCM 148 / SB).